Here is a 124-residue protein sequence, read N- to C-terminus: Large ribosomal subunit protein bL21 (124 aa).

The interval Thr-105–Ala-124 is disordered. Low complexity predominate over residues Ala-115–Ala-124.

The protein belongs to the bacterial ribosomal protein bL21 family. As to quaternary structure, part of the 50S ribosomal subunit. Contacts protein L20.

This protein binds to 23S rRNA in the presence of protein L20. In Xanthobacter autotrophicus (strain ATCC BAA-1158 / Py2), this protein is Large ribosomal subunit protein bL21.